The following is a 505-amino-acid chain: ATP synthase subunit alpha (505 aa).

Position 170-177 (170-177 (GDRQTGKT)) interacts with ATP.

The protein belongs to the ATPase alpha/beta chains family. F-type ATPases have 2 components, CF(1) - the catalytic core - and CF(0) - the membrane proton channel. CF(1) has five subunits: alpha(3), beta(3), gamma(1), delta(1), epsilon(1). CF(0) has four main subunits: a(1), b(1), b'(1) and c(9-12).

The protein localises to the cellular thylakoid membrane. The enzyme catalyses ATP + H2O + 4 H(+)(in) = ADP + phosphate + 5 H(+)(out). Its function is as follows. Produces ATP from ADP in the presence of a proton gradient across the membrane. The alpha chain is a regulatory subunit. This is ATP synthase subunit alpha from Prochlorococcus marinus (strain MIT 9303).